The sequence spans 361 residues: Beta-hexosaminidase (361 aa).

Substrate-binding positions include D69, R77, R144, and 174-175; that span reads KH. Catalysis depends on H187, which acts as the Proton donor/acceptor. The Nucleophile role is filled by D258.

Belongs to the glycosyl hydrolase 3 family. NagZ subfamily.

Its subcellular location is the cytoplasm. The enzyme catalyses Hydrolysis of terminal non-reducing N-acetyl-D-hexosamine residues in N-acetyl-beta-D-hexosaminides.. Its pathway is cell wall biogenesis; peptidoglycan recycling. Functionally, plays a role in peptidoglycan recycling by cleaving the terminal beta-1,4-linked N-acetylglucosamine (GlcNAc) from peptide-linked peptidoglycan fragments, giving rise to free GlcNAc, anhydro-N-acetylmuramic acid and anhydro-N-acetylmuramic acid-linked peptides. The sequence is that of Beta-hexosaminidase from Neisseria gonorrhoeae (strain ATCC 700825 / FA 1090).